A 213-amino-acid chain; its full sequence is Cytochrome c biogenesis ATP-binding export protein CcmA (213 aa).

The 206-residue stretch at 8–213 (LQATALTCER…RDIDLGQWAA (206 aa)) folds into the ABC transporter domain. ATP is bound at residue 40 to 47 (GPNGSGKT).

This sequence belongs to the ABC transporter superfamily. CcmA exporter (TC 3.A.1.107) family. The complex is composed of two ATP-binding proteins (CcmA) and two transmembrane proteins (CcmB).

Its subcellular location is the cell inner membrane. The enzyme catalyses heme b(in) + ATP + H2O = heme b(out) + ADP + phosphate + H(+). Functionally, part of the ABC transporter complex CcmAB involved in the biogenesis of c-type cytochromes; once thought to export heme, this seems not to be the case, but its exact role is uncertain. Responsible for energy coupling to the transport system. This is Cytochrome c biogenesis ATP-binding export protein CcmA from Pseudomonas savastanoi pv. phaseolicola (strain 1448A / Race 6) (Pseudomonas syringae pv. phaseolicola (strain 1448A / Race 6)).